The sequence spans 594 residues: Golgi-associated RAB2 interactor protein 4 (594 aa).

The disordered stretch occupies residues 387-524; it reads MDAAAGPPVS…TSSGSSKGLG (138 aa). Over residues 396–406 the composition is skewed to polar residues; that stretch reads STRQSKSSLSG. Composition is skewed to basic and acidic residues over residues 408–433, 442–455, and 468–477; these read HGRE…DRAL, TGES…DKIA, and ANRDDKKEKG. A compositionally biased stretch (polar residues) spans 511–520; it reads SLWTTSSGSS.

This sequence belongs to the GARIN family. Interacts (via N-terminus) with RAB2B (in GTP-bound form).

It localises to the golgi apparatus. RAB2B effector protein required for the compacted Golgi morphology, probably through interaction with small GTPase RAB2B. The polypeptide is Golgi-associated RAB2 interactor protein 4 (Homo sapiens (Human)).